A 99-amino-acid chain; its full sequence is Large ribosomal subunit protein bL21 (99 aa).

Belongs to the bacterial ribosomal protein bL21 family. As to quaternary structure, part of the 50S ribosomal subunit. Contacts protein L20.

In terms of biological role, this protein binds to 23S rRNA in the presence of protein L20. This Acholeplasma laidlawii (strain PG-8A) protein is Large ribosomal subunit protein bL21.